The sequence spans 491 residues: Protein nucleotidyltransferase YdiU (491 aa).

ATP contacts are provided by glycine 88, glycine 90, arginine 91, lysine 111, aspartate 123, glycine 124, arginine 174, and arginine 181. Aspartate 250 functions as the Proton acceptor in the catalytic mechanism. The Mg(2+) site is built by asparagine 251 and aspartate 260. Residue aspartate 260 coordinates ATP.

Belongs to the SELO family. The cofactor is Mg(2+). It depends on Mn(2+) as a cofactor.

It catalyses the reaction L-seryl-[protein] + ATP = 3-O-(5'-adenylyl)-L-seryl-[protein] + diphosphate. It carries out the reaction L-threonyl-[protein] + ATP = 3-O-(5'-adenylyl)-L-threonyl-[protein] + diphosphate. The enzyme catalyses L-tyrosyl-[protein] + ATP = O-(5'-adenylyl)-L-tyrosyl-[protein] + diphosphate. The catalysed reaction is L-histidyl-[protein] + UTP = N(tele)-(5'-uridylyl)-L-histidyl-[protein] + diphosphate. It catalyses the reaction L-seryl-[protein] + UTP = O-(5'-uridylyl)-L-seryl-[protein] + diphosphate. It carries out the reaction L-tyrosyl-[protein] + UTP = O-(5'-uridylyl)-L-tyrosyl-[protein] + diphosphate. Its function is as follows. Nucleotidyltransferase involved in the post-translational modification of proteins. It can catalyze the addition of adenosine monophosphate (AMP) or uridine monophosphate (UMP) to a protein, resulting in modifications known as AMPylation and UMPylation. The protein is Protein nucleotidyltransferase YdiU of Bradyrhizobium sp. (strain BTAi1 / ATCC BAA-1182).